A 176-amino-acid chain; its full sequence is ATP-dependent protease subunit HslV (176 aa).

Residue Thr-5 is part of the active site. Residues Ala-161, Cys-164, and Thr-167 each contribute to the Na(+) site.

This sequence belongs to the peptidase T1B family. HslV subfamily. As to quaternary structure, a double ring-shaped homohexamer of HslV is capped on each side by a ring-shaped HslU homohexamer. The assembly of the HslU/HslV complex is dependent on binding of ATP.

Its subcellular location is the cytoplasm. It catalyses the reaction ATP-dependent cleavage of peptide bonds with broad specificity.. Allosterically activated by HslU binding. In terms of biological role, protease subunit of a proteasome-like degradation complex believed to be a general protein degrading machinery. In Desulforamulus reducens (strain ATCC BAA-1160 / DSM 100696 / MI-1) (Desulfotomaculum reducens), this protein is ATP-dependent protease subunit HslV.